The sequence spans 154 residues: Lipoprotein signal peptidase (154 aa).

The next 2 membrane-spanning stretches (helical) occupy residues Gly55 to Met75 and Leu84 to Val104. Catalysis depends on residues Asp111 and Asp129. The chain crosses the membrane as a helical span at residues Ile124–Phe144.

The protein belongs to the peptidase A8 family.

The protein localises to the cell membrane. The enzyme catalyses Release of signal peptides from bacterial membrane prolipoproteins. Hydrolyzes -Xaa-Yaa-Zaa-|-(S,diacylglyceryl)Cys-, in which Xaa is hydrophobic (preferably Leu), and Yaa (Ala or Ser) and Zaa (Gly or Ala) have small, neutral side chains.. Its pathway is protein modification; lipoprotein biosynthesis (signal peptide cleavage). Its function is as follows. This protein specifically catalyzes the removal of signal peptides from prolipoproteins. The sequence is that of Lipoprotein signal peptidase from Listeria monocytogenes serovar 1/2a (strain ATCC BAA-679 / EGD-e).